Consider the following 111-residue polypeptide: COX assembly mitochondrial protein (111 aa).

A CHCH domain is found at Y39–E82. Short sequence motifs (cx9C motif) lie at residues C42–C52 and C64–C74. Intrachain disulfides connect C42/C74 and C52/C64.

It belongs to the CMC family.

The protein resides in the mitochondrion inner membrane. Functionally, required for mitochondrial cytochrome c oxidase (COX) assembly and respiration. Binds copper. May be involved in copper trafficking and distribution to mitochondrial COX and SOD1. The chain is COX assembly mitochondrial protein (CMC1) from Saccharomyces cerevisiae (strain YJM789) (Baker's yeast).